A 352-amino-acid polypeptide reads, in one-letter code: Decapping nuclease din1 (352 aa).

Residues Arg33 and 93-95 each bind substrate; that span reads WRG. Glu150 is an a divalent metal cation binding site. Substrate contacts are provided by Cys182 and Glu199. Asp201 contacts a divalent metal cation. A Phosphoserine modification is found at Ser218. A divalent metal cation is bound by residues Glu239 and Leu240. Residues Lys241 and Gln263 each contribute to the substrate site.

This sequence belongs to the DXO/Dom3Z family. As to quaternary structure, interacts with dhp1/Rat1; the interaction is direct, stabilizes dhp1 protein structure and stimulates its exoribonuclease activity. The interaction also stimulates din1 pyrophosphohydrolase activity, probably by recruiting it to mRNA substrates. The cofactor is a divalent metal cation.

Its subcellular location is the nucleus. It catalyses the reaction a 5'-end NAD(+)-phospho-ribonucleoside in mRNA + H2O = a 5'-end phospho-ribonucleoside in mRNA + NAD(+) + H(+). The enzyme catalyses a 5'-end (N(7)-methyl 5'-triphosphoguanosine)-ribonucleoside-ribonucleotide in mRNA + H2O = a (N(7)-methyl 5'-triphosphoguanosine)-nucleoside + a 5'-end phospho-ribonucleoside in mRNA + H(+). The catalysed reaction is a 5'-end triphospho-ribonucleoside in mRNA + H2O = a 5'-end phospho-ribonucleoside in mRNA + diphosphate + H(+). Decapping enzyme for NAD-capped RNAs: specifically hydrolyzes the nicotinamide adenine dinucleotide (NAD) cap from a subset of RNAs by removing the entire NAD moiety from the 5'-end of an NAD-capped RNA. The NAD-cap is present at the 5'-end of some RNAs and snoRNAs. In contrast to the canonical 5'-end N7 methylguanosine (m7G) cap, the NAD cap promotes mRNA decay. Also acts as a non-canonical decapping enzyme that removes the entire cap structure of m7G capped or incompletely capped RNAs and mediates their subsequent degradation. Specifically degrades pre-mRNAs with a defective m7G cap and is part of a pre-mRNA capping quality control. Has decapping activity toward incomplete 5'-end m7G cap mRNAs such as unmethylated 5'-end-capped RNA (cap0), while it has no activity toward 2'-O-ribose methylated m7G cap (cap1). Also possesses RNA 5'-pyrophosphohydrolase activity by hydrolyzing the 5'-end triphosphate to release pyrophosphates. Stimulates exoribonuclease activity of dhp1, allowing it to degrade RNAs with stable secondary structure more effectively. The chain is Decapping nuclease din1 from Schizosaccharomyces pombe (strain 972 / ATCC 24843) (Fission yeast).